Reading from the N-terminus, the 65-residue chain is Large ribosomal subunit protein bL35 (65 aa).

The protein belongs to the bacterial ribosomal protein bL35 family.

The sequence is that of Large ribosomal subunit protein bL35 from Clostridium kluyveri (strain NBRC 12016).